Reading from the N-terminus, the 254-residue chain is N-acetylglucosamine-induced protein 1 (254 aa).

It is found in the cytoplasm. Its function is as follows. N-acetylglucosamine-induced protein which plays a role in the N-acetylglucosamine metabolic pathway. This Candida albicans (strain SC5314 / ATCC MYA-2876) (Yeast) protein is N-acetylglucosamine-induced protein 1.